Reading from the N-terminus, the 326-residue chain is MYQDYPGNFDTSSRGSSGSPAHAESYSSGGGGQQKFRVDMPGSGSAFIPTINAITTSQDLQWMVQPTVITSMSNPYPRSHPYSPLPGLASVPGHMALPRPGVIKTIGTTVGRRRRDEQLSPEEEEKRRIRRERNKLAAAKCRNRRRELTEKLQAETEELEEEKSGLQKEIAELQKEKEKLEFMLVAHGPVCKISPEERRSPPTSGLQSLRGTGSAVGPVVVKQEPPEEDSPSSSAGMDKTQRSVIKPISIAGGGFYGEEPLHTPIVVTSTPAITPGTSNLVFTYPSVLEQESPASPSESCSKAHRRSSSSGDQSSDSLNSPTLLAL.

The residue at position 1 (methionine 1) is an N-acetylmethionine. Residues 1–39 (MYQDYPGNFDTSSRGSSGSPAHAESYSSGGGGQQKFRVD) are disordered. The segment covering 9 to 19 (FDTSSRGSSGS) has biased composition (polar residues). Residue lysine 35 forms a Glycyl lysine isopeptide (Lys-Gly) (interchain with G-Cter in SUMO2) linkage. An N6-acetyllysine; alternate modification is found at lysine 104. Residue lysine 104 forms a Glycyl lysine isopeptide (Lys-Gly) (interchain with G-Cter in SUMO2); alternate linkage. Disordered stretches follow at residues 111 to 131 (GRRRRDEQLSPEEEEKRRIRR), 193 to 244 (ISPE…QRSV), and 289 to 326 (EQESPASPSESCSKAHRRSSSSGDQSSDSLNSPTLLAL). Phosphoserine is present on serine 120. Residues 124 to 187 (EEKRRIRRER…EKLEFMLVAH (64 aa)) enclose the bZIP domain. Residues 126–128 (KRR) form a basic motif region. A leucine-zipper region spans residues 129-136 (IRRERNKL). At serine 200 the chain carries Phosphoserine. Polar residues predominate over residues 201-211 (PPTSGLQSLRG). Lysine 222 is covalently cross-linked (Glycyl lysine isopeptide (Lys-Gly) (interchain with G-Cter in SUMO2); alternate). Lysine 222 participates in a covalent cross-link: Glycyl lysine isopeptide (Lys-Gly) (interchain with G-Cter in SUMO1); alternate. Serine 230 is subject to Phosphoserine. Residue lysine 239 forms a Glycyl lysine isopeptide (Lys-Gly) (interchain with G-Cter in SUMO2) linkage. Serine 308 and serine 320 each carry phosphoserine. Residues 308–320 (SSSGDQSSDSLNS) show a composition bias toward low complexity.

It belongs to the bZIP family. Fos subfamily. As to quaternary structure, heterodimer. Interacts with the BAF multiprotein chromatin-remodeling complex subunits SMARCB1 and SMARCD1. Interacts with ARID1A and JUN. As to expression, expressed in the brain cortex. Expressed at night in pineal gland (at protein level). Also expressed in osteoblasts (at protein level).

The protein localises to the nucleus. Its function is as follows. Controls osteoclast survival and size. As a dimer with JUN, activates LIF transcription. Activates CEBPB transcription in PGE2-activated osteoblasts. This chain is Fos-related antigen 2 (Fosl2), found in Rattus norvegicus (Rat).